The following is a 161-amino-acid chain: Phosphopantetheine adenylyltransferase (161 aa).

Residue Ser-9 coordinates substrate. Residues 9 to 10 (SF) and His-17 each bind ATP. Residues Lys-41, Leu-73, and Arg-87 each coordinate substrate. Residues 88 to 90 (GLR), Glu-98, and 123 to 129 (YTFISSS) each bind ATP.

The protein belongs to the bacterial CoaD family. In terms of assembly, homohexamer. Requires Mg(2+) as cofactor.

Its subcellular location is the cytoplasm. The catalysed reaction is (R)-4'-phosphopantetheine + ATP + H(+) = 3'-dephospho-CoA + diphosphate. It functions in the pathway cofactor biosynthesis; coenzyme A biosynthesis; CoA from (R)-pantothenate: step 4/5. Functionally, reversibly transfers an adenylyl group from ATP to 4'-phosphopantetheine, yielding dephospho-CoA (dPCoA) and pyrophosphate. The protein is Phosphopantetheine adenylyltransferase of Syntrophomonas wolfei subsp. wolfei (strain DSM 2245B / Goettingen).